The following is a 185-amino-acid chain: ATP-dependent protease subunit HslV (185 aa).

Thr12 is a catalytic residue. The Na(+) site is built by Ser168, Cys171, and Thr174.

It belongs to the peptidase T1B family. HslV subfamily. In terms of assembly, a double ring-shaped homohexamer of HslV is capped on each side by a ring-shaped HslU homohexamer. The assembly of the HslU/HslV complex is dependent on binding of ATP.

It is found in the cytoplasm. It carries out the reaction ATP-dependent cleavage of peptide bonds with broad specificity.. With respect to regulation, allosterically activated by HslU binding. Functionally, protease subunit of a proteasome-like degradation complex believed to be a general protein degrading machinery. In Jannaschia sp. (strain CCS1), this protein is ATP-dependent protease subunit HslV.